The chain runs to 657 residues: Transcription factor 12 (657 aa).

The span at 1–20 (MDEKGGTTSWGTSGQPSPSY) shows a compositional bias: polar residues. Disordered regions lie at residues 1–76 (MDEK…SGLS), 89–285 (LGSP…QTGD), 297–340 (PDHT…YENS), 459–555 (VSAQ…ERRM), and 628–657 (KVSA…MGHM). Residues 30–43 (HYSDHLNDSRKGTH) are compositionally biased toward basic and acidic residues. Polar residues-rich tracts occupy residues 49–70 (TPFS…SLYS) and 93–112 (AQLS…SATS). Positions 68 to 89 (LYSRDSGLSGCQSSLLRQELGL) are leucine-zipper. The Nuclear localization signal signature appears at 130 to 136 (KKVRKVP). Polar residues-rich tracts occupy residues 168 to 193 (MFAS…NGMS), 202 to 216 (GTST…SYGS), and 230 to 254 (VSPT…SSSP). Positions 300-311 (TSSSFPSNPSTP) are enriched in low complexity. Over residues 312–340 (VGSPSPLTGASQWSRSGGQAPSSPNYENS) the composition is skewed to polar residues. 3 stretches are compositionally biased toward basic and acidic residues: residues 493–505 (IKSE…ENIH), 511–526 (DDMK…DIKV), and 543–555 (PEQK…ERRM). The bHLH domain occupies 552–605 (ERRMANNARERLRVRDINEAFKELGRMCQLHLKSEKPQTKLLILHQAVAVILSL). The class A specific domain stretch occupies residues 607 to 630 (QQVRERNLNPKAACLKRREEEKVS). A compositionally biased stretch (polar residues) spans 648-657 (SETTNPMGHM).

As to quaternary structure, efficient DNA binding requires dimerization with another bHLH protein. Forms homo- or heterooligomers with myogenin, E12 and ITF2 proteins.

It localises to the nucleus. Transcriptional regulator. Involved in the initiation of neuronal differentiation. Activates transcription by binding to the E box-containing promoter. The sequence is that of Transcription factor 12 (TCF12) from Gallus gallus (Chicken).